We begin with the raw amino-acid sequence, 890 residues long: Kinesin-like protein KIN-7C, mitochondrial (890 aa).

Over residues 1-13 (MSATRSQRSSTIS) the composition is skewed to polar residues. Positions 1-66 (MSATRSQRSS…TSSAAASSTA (66 aa)) are disordered. Residues 1-73 (MSATRSQRSS…STAVASTKLK (73 aa)) constitute a mitochondrion transit peptide. Low complexity predominate over residues 40–66 (SPVTSSSPLLRSSPSPSTSSAAASSTA). The region spanning 75-394 (NITVTIRFRP…LKFAQRCKHV (320 aa)) is the Kinesin motor domain. Position 155-162 (155-162 (GVTSSGKT)) interacts with ATP. Positions 395–468 (EIKASRNKIM…MGRIQRLTKL (74 aa)) form a coiled coil. The disordered stretch occupies residues 511-595 (DGAVSTVSEH…TTRRENAAAI (85 aa)). Residues 569-579 (SQASGSPSSSS) show a composition bias toward low complexity. Coiled-coil stretches lie at residues 664–693 (HIRDQIQKLEDEISEKKDQIRVLEQQIIEI) and 729–765 (ADNRILQEQLQMTKSENAEMQETIILLRQQLDSLAER). Residues 768–797 (TQQIAGDESSGKNIHNRNGEESEIYSGAGT) are disordered. Positions 818–884 (NETALNSQAL…AEEVTRLCNE (67 aa)) form a coiled coil.

It belongs to the TRAFAC class myosin-kinesin ATPase superfamily. Kinesin family. KIN-7 subfamily.

It localises to the mitochondrion. The chain is Kinesin-like protein KIN-7C, mitochondrial from Arabidopsis thaliana (Mouse-ear cress).